The primary structure comprises 60 residues: Metallothionein (60 aa).

A beta region spans residues 1–28 (MDPCECSKTGNCTCGGSCTCKNCSCTSC). A divalent metal cation is bound by residues cysteine 4, cysteine 6, cysteine 12, cysteine 14, cysteine 18, cysteine 20, cysteine 23, cysteine 25, cysteine 28, cysteine 32, cysteine 33, cysteine 35, cysteine 36, cysteine 40, cysteine 43, cysteine 47, cysteine 49, cysteine 54, cysteine 58, and cysteine 59. An alpha region spans residues 29–60 (KKSCCSCCPSGCSKCASGCVCKGKTCDTSCCQ).

Belongs to the metallothionein superfamily. Type 1 family.

Its function is as follows. Metallothioneins have a high content of cysteine residues that bind various heavy metals. This chain is Metallothionein (mt), found in Gobiomorphus cotidianus (New Zealand common bully).